The chain runs to 879 residues: MKSLTSAEIRQMFIDFFKEKSHSVEPSASLVPHEDPTLLWINSGVATLKKYFDGRVIPDNPRIVNAQKSIRTNDIENVGYTARHHTFFEMLGNFSIGDYFKKEAMEWAWEFLTDEKWINFDEALLSVTVHPEDDEAYDIWLNDIGIPKERIIRIEENFWDIGEGPSGPNTEIFYDRGESYGNDPQDPELYPGGENNRYLEVWNLVFSQFNHNPDDTYTPLPKKNIDTGMGLERLTSIIQQVPTNFETDLFMPIIRETERISKRKYGNSEAEDTSFKVIADHIRTVSFAIGDGAMPSNEGRGYVLRRLIRRAIRFAKDLGVNEPFMYQLVPVVGDIMKDFYPEVQKDAGYISNVIKVEEERFHETLNDGLIILASIIEEERKKGSEVFPGEEVFRLYDTYGFPKELTEEYVEQQGFTVNQAGYDKEMNKQRERARNARQKVDSMQVQDTIFTEINVDSTFVGYDQLQKETTIEALVKDKNQIEEANQGDVLYVFLKETPFYAESGGQVADNGWIYSENASAYVSDVQKSPNGDHIHQIEIKEGSFKINQPVHAVVERTFRNHVIKNHTATHLLHQALKDVLGSHVNQAGSLVRPERLRFDFSHFHGVTAEELQQIELKVNEKIWESLPVAIDSKKIDEAKAMGAMALFGEKYGDIVRVVQIGDYSIELCGGCHVINTAEIGLFKIVQETGIGAGTRRIEAVTSKQAYDYLNTKLDLLHNSAQKLKTSEEQLPERIEGLQVELKDSQKQVDSLSAKLSNLEASSILDEVKEISGVPVLAQEVNVKDMNQLRSMMDELKQKLSSGVILLAAENNGKVQLVAGVTKDMLEKNMHAGNIVKQAATVCGGGGGGRPDMAQAGGKDPSKIKEALQSVEQYIVDTVK.

Zn(2+) is bound by residues H566, H570, C668, and H672.

This sequence belongs to the class-II aminoacyl-tRNA synthetase family. The cofactor is Zn(2+).

It localises to the cytoplasm. The catalysed reaction is tRNA(Ala) + L-alanine + ATP = L-alanyl-tRNA(Ala) + AMP + diphosphate. Its function is as follows. Catalyzes the attachment of alanine to tRNA(Ala) in a two-step reaction: alanine is first activated by ATP to form Ala-AMP and then transferred to the acceptor end of tRNA(Ala). Also edits incorrectly charged Ser-tRNA(Ala) and Gly-tRNA(Ala) via its editing domain. This Oceanobacillus iheyensis (strain DSM 14371 / CIP 107618 / JCM 11309 / KCTC 3954 / HTE831) protein is Alanine--tRNA ligase.